The sequence spans 361 residues: MKTIIAAYSGVLRGTGSSLLSAVHDLPSIPWLSKSSVVRHLQIISVLQWVLSFLILGVACTAVLVYIFCTDLWLIAALYFTWMVLDWNTPYKGGRRSSWVRNWAVWRYFRDYFPVKLVKTHNLLPSRNYIFGYHPHGIMCLGAFCNFGTEATGVSKKFPGIKCHLATLAGNFRMPVLREYLMSGGICPVNRDTINYILSKNGTGNAVVIAVGGAAESLNCRPGKNTVTLLHRKGFVKVALQHGADLVPIYSFGENETYKQVVFEEGSWGRWIQQKFQKYVGFAPCLFHGCSFFSSNSWGLVPYANPITTVVGEPITVPKIEQPTQKDVELYHSMYLSSLHRLFDKYKTKLGLPDSETLEFI.

Residues 1–42 (MKTIIAAYSGVLRGTGSSLLSAVHDLPSIPWLSKSSVVRHLQ) are Cytoplasmic-facing. A helical transmembrane segment spans residues 43–61 (IISVLQWVLSFLILGVACT). Residues 62–65 (AVLV) lie on the Lumenal side of the membrane. The chain crosses the membrane as a helical span at residues 66-85 (YIFCTDLWLIAALYFTWMVL). Residues 86–361 (DWNTPYKGGR…LPDSETLEFI (276 aa)) are Cytoplasmic-facing.

Belongs to the diacylglycerol acyltransferase family.

The protein localises to the endoplasmic reticulum membrane. Its subcellular location is the lipid droplet. It is found in the cytoplasm. The protein resides in the perinuclear region. It catalyses the reaction an acyl-CoA + a 1,2-diacyl-sn-glycerol = a triacyl-sn-glycerol + CoA. The enzyme catalyses all-trans-retinol + an acyl-CoA = an all-trans-retinyl ester + CoA. The catalysed reaction is 2-(9Z-octadecenoyl)-glycerol + (9Z)-octadecenoyl-CoA = 1,2-di-(9Z-octadecenoyl)-sn-glycerol + CoA. It carries out the reaction 1,2-di-(9Z-octadecenoyl)-sn-glycerol + (9Z)-octadecenoyl-CoA = 1,2,3-tri-(9Z-octadecenoyl)-glycerol + CoA. It catalyses the reaction all-trans-retinol + hexadecanoyl-CoA = all-trans-retinyl hexadecanoate + CoA. The enzyme catalyses 1-O-(9Z-octadecenyl)-glycerol + (9Z)-octadecenoyl-CoA = 1-O-(9Z-octadecyl)-3-(9Z-octadecenoyl)-glycerol + CoA. The catalysed reaction is 1-(9Z-octadecenoyl)-glycerol + (9Z)-octadecenoyl-CoA = 1,2-di-(9Z-octadecenoyl)-glycerol + CoA. It carries out the reaction 1,2-di-(9Z-octadecenoyl)-sn-glycerol + hexadecanoyl-CoA = 1,2-di-(9Z)-octadecenoyl-3-hexadecanoyl-sn-glycerol + CoA. It catalyses the reaction 1,3-di-(9Z-octadecenoyl)-glycerol + (9Z)-octadecenoyl-CoA = 1,2,3-tri-(9Z-octadecenoyl)-glycerol + CoA. The enzyme catalyses 2,3-di-(9Z)-octadecenoyl-sn-glycerol + (9Z)-octadecenoyl-CoA = 1,2,3-tri-(9Z-octadecenoyl)-glycerol + CoA. The catalysed reaction is 2-(9Z-octadecenoyl)-glycerol + hexadecanoyl-CoA = 1-hexadecanoyl-2-(9Z-octadecenoyl)-sn-glycerol + CoA. The protein operates within glycerolipid metabolism; triacylglycerol biosynthesis. Functionally, essential acyltransferase that catalyzes the terminal and only committed step in triacylglycerol synthesis by using diacylglycerol and fatty acyl CoA as substrates. Required for synthesis and storage of intracellular triglycerides. Probably plays a central role in cytosolic lipid accumulation. The polypeptide is Diacylglycerol O-acyltransferase 2 (dgat2) (Xenopus laevis (African clawed frog)).